A 1154-amino-acid chain; its full sequence is Polyketide biosynthesis protein ThaF (1154 aa).

Residues Met330–Val714 are acyl transferase. Positions Ser627 to Ala689 are disordered. Low complexity predominate over residues Ala641–Pro672. A compositionally biased stretch (pro residues) spans Ala673–Ala689.

The protein in the N-terminal section; belongs to the FabD family.

Its subcellular location is the cytoplasm. The catalysed reaction is holo-[ACP] + malonyl-CoA = malonyl-[ACP] + CoA. It participates in antibiotic biosynthesis. Involved in production of the polyketide antibiotic thailandamide. Probably has an acyl transferase activity and could also have a flavin mononucleotide-dependent oxidoreductase activity. The sequence is that of Polyketide biosynthesis protein ThaF from Burkholderia thailandensis (strain ATCC 700388 / DSM 13276 / CCUG 48851 / CIP 106301 / E264).